A 152-amino-acid polypeptide reads, in one-letter code: Transcriptional regulator MraZ (152 aa).

2 SpoVT-AbrB domains span residues 5 to 52 (VTSI…PLHE) and 81 to 124 (ATEC…QDKQ).

The protein belongs to the MraZ family. As to quaternary structure, forms oligomers.

The protein localises to the cytoplasm. Its subcellular location is the nucleoid. The polypeptide is Transcriptional regulator MraZ (Actinobacillus pleuropneumoniae serotype 3 (strain JL03)).